A 403-amino-acid polypeptide reads, in one-letter code: Beta-galactoside alpha-2,6-sialyltransferase 1 (403 aa).

The Cytoplasmic portion of the chain corresponds to 1-9 (MIHTNLKRK). The chain crosses the membrane as a helical; Signal-anchor for type II membrane protein span at residues 10 to 26 (FSCFVLVFLLFAIICVW). Residues 27–403 (KKGSDYEALT…TLSGFRNNRC (377 aa)) lie on the Lumenal side of the membrane. Cystine bridges form between Cys-139-Cys-403, Cys-181-Cys-332, and Cys-350-Cys-361. 2 N-linked (GlcNAc...) asparagine glycosylation sites follow: Asn-146 and Asn-158. Substrate contacts are provided by residues Ser-186, Asn-209, Asn-230, 319–321 (SSG), Cys-350, Tyr-351, Thr-362, Tyr-366, His-367, and Lys-373. Tyr-366 bears the Phosphotyrosine mark.

Belongs to the glycosyltransferase 29 family. In terms of assembly, monomer and homodimer. N-glycosylated.

The protein resides in the golgi apparatus. Its subcellular location is the golgi stack membrane. The protein localises to the secreted. The enzyme catalyses a beta-D-galactoside + CMP-N-acetyl-beta-neuraminate = an N-acetyl-alpha-neuraminyl-(2-&gt;6)-beta-D-galactosyl derivative + CMP + H(+). It functions in the pathway protein modification; protein glycosylation. Transfers sialic acid from CMP-sialic acid to galactose-containing acceptor substrates. In Mus musculus (Mouse), this protein is Beta-galactoside alpha-2,6-sialyltransferase 1 (St6gal1).